The chain runs to 298 residues: ADP/ATP translocase 3 (298 aa).

N-acetylmethionine is present on M1. Residues 1-7 are Mitochondrial intermembrane-facing; the sequence is MTEQAIS. At T2 the chain carries N-acetylthreonine; in ADP/ATP translocase 3, N-terminally processed. A Solcar 1 repeat occupies 6–98; the sequence is ISFAKDFLAG…FAFKDKYKQI (93 aa). Residues 8 to 37 form a helical membrane-spanning segment; the sequence is FAKDFLAGGIAAAISKTAVAPIERVKLLLQ. The Mitochondrial matrix portion of the chain corresponds to 38-74; it reads VQHASKQIAADKQYKGIVDCIVRIPKEQGVLSFWRGN. The residue at position 52 (K52) is an N6,N6,N6-trimethyllysine. The chain crosses the membrane as a helical span at residues 75-99; it reads LANVIRYFPTQALNFAFKDKYKQIF. The ADP site is built by R80 and K92. Residues 100–109 are Mitochondrial intermembrane-facing; the sequence is LGGVDKRTQF. K105 is subject to N6-acetyllysine. A helical membrane pass occupies residues 110–130; sequence WRYFAGNLASGGAAGATSLCF. 2 Solcar repeats span residues 111-201 and 212-297; these read RYFA…AKGM and VSWM…LKKV. Residues 131–178 lie on the Mitochondrial matrix side of the membrane; it reads VYPLDFARTRLAADVGKSGSEREFRGLGDCLVKITKSDGIRGLYQGFN. Residues 179 to 199 traverse the membrane as a helical segment; that stretch reads VSVQGIIIYRAAYFGIYDTAK. Over 200-210 the chain is Mitochondrial intermembrane; sequence GMLPDPKNTHI. The helical transmembrane segment at 211–231 threads the bilayer; sequence VVSWMIAQTVTAVAGVVSYPF. Over 232-273 the chain is Mitochondrial matrix; it reads DTVRRRMMMQSGRKGADIMYKGTVDCWRKILKDEGGKAFFKG. R235 contacts ADP. Positions 235–240 are important for transport activity; it reads RRRMMM. A Nucleotide carrier signature motif motif is present at residues 235-240; the sequence is RRRMMM. K268 is subject to N6-acetyllysine. The chain crosses the membrane as a helical span at residues 274–291; it reads AWSNVLRGMGGAFVLVLY. Residues 292-298 lie on the Mitochondrial intermembrane side of the membrane; that stretch reads DELKKVI.

The protein belongs to the mitochondrial carrier (TC 2.A.29) family. In terms of assembly, monomer. Found in a complex with ARL2, ARL2BP and SLC25A6/ANT3. In terms of processing, trimethylated by ANTKMT at Lys-52.

It is found in the mitochondrion inner membrane. The protein localises to the membrane. The catalysed reaction is ADP(in) + ATP(out) = ADP(out) + ATP(in). The enzyme catalyses H(+)(in) = H(+)(out). The matrix-open state (m-state) is inhibited by the membrane-permeable bongkrekic acid (BKA). The cytoplasmic-open state (c-state) is inhibited by the membrane-impermeable toxic inhibitor carboxyatractyloside (CATR). Proton transporter activity is inhibited by ADP:ATP antiporter activity. In terms of biological role, ADP:ATP antiporter that mediates import of ADP into the mitochondrial matrix for ATP synthesis, and export of ATP out to fuel the cell. Cycles between the cytoplasmic-open state (c-state) and the matrix-open state (m-state): operates by the alternating access mechanism with a single substrate-binding site intermittently exposed to either the cytosolic (c-state) or matrix (m-state) side of the inner mitochondrial membrane. In addition to its ADP:ATP antiporter activity, also involved in mitochondrial uncoupling and mitochondrial permeability transition pore (mPTP) activity. Plays a role in mitochondrial uncoupling by acting as a proton transporter: proton transport uncouples the proton flows via the electron transport chain and ATP synthase to reduce the efficiency of ATP production and cause mitochondrial thermogenesis. Proton transporter activity is inhibited by ADP:ATP antiporter activity, suggesting that SLC25A6/ANT3 acts as a master regulator of mitochondrial energy output by maintaining a delicate balance between ATP production (ADP:ATP antiporter activity) and thermogenesis (proton transporter activity). Proton transporter activity requires free fatty acids as cofactor, but does not transport it. Also plays a key role in mPTP opening, a non-specific pore that enables free passage of the mitochondrial membranes to solutes of up to 1.5 kDa, and which contributes to cell death. It is however unclear if SLC25A6/ANT3 constitutes a pore-forming component of mPTP or regulates it. The polypeptide is ADP/ATP translocase 3 (Bos taurus (Bovine)).